Consider the following 962-residue polypeptide: Glycine dehydrogenase (decarboxylating) (962 aa).

Lys-710 is modified (N6-(pyridoxal phosphate)lysine).

Belongs to the GcvP family. In terms of assembly, the glycine cleavage system is composed of four proteins: P, T, L and H. It depends on pyridoxal 5'-phosphate as a cofactor.

It carries out the reaction N(6)-[(R)-lipoyl]-L-lysyl-[glycine-cleavage complex H protein] + glycine + H(+) = N(6)-[(R)-S(8)-aminomethyldihydrolipoyl]-L-lysyl-[glycine-cleavage complex H protein] + CO2. The glycine cleavage system catalyzes the degradation of glycine. The P protein binds the alpha-amino group of glycine through its pyridoxal phosphate cofactor; CO(2) is released and the remaining methylamine moiety is then transferred to the lipoamide cofactor of the H protein. In Idiomarina loihiensis (strain ATCC BAA-735 / DSM 15497 / L2-TR), this protein is Glycine dehydrogenase (decarboxylating).